The primary structure comprises 209 residues: Ribosomal RNA small subunit methyltransferase G (209 aa).

Residues glycine 71, phenylalanine 76, alanine 122 to glutamate 123, and arginine 135 each bind S-adenosyl-L-methionine.

The protein belongs to the methyltransferase superfamily. RNA methyltransferase RsmG family.

It localises to the cytoplasm. Its function is as follows. Specifically methylates the N7 position of a guanine in 16S rRNA. The polypeptide is Ribosomal RNA small subunit methyltransferase G (Phocaeicola vulgatus (strain ATCC 8482 / DSM 1447 / JCM 5826 / CCUG 4940 / NBRC 14291 / NCTC 11154) (Bacteroides vulgatus)).